A 513-amino-acid polypeptide reads, in one-letter code: ATP synthase subunit alpha (513 aa).

169-176 (GDRQIGKT) provides a ligand contact to ATP.

The protein belongs to the ATPase alpha/beta chains family. In terms of assembly, F-type ATPases have 2 components, CF(1) - the catalytic core - and CF(0) - the membrane proton channel. CF(1) has five subunits: alpha(3), beta(3), gamma(1), delta(1), epsilon(1). CF(0) has three main subunits: a(1), b(2) and c(9-12). The alpha and beta chains form an alternating ring which encloses part of the gamma chain. CF(1) is attached to CF(0) by a central stalk formed by the gamma and epsilon chains, while a peripheral stalk is formed by the delta and b chains.

The protein resides in the cell inner membrane. The enzyme catalyses ATP + H2O + 4 H(+)(in) = ADP + phosphate + 5 H(+)(out). Produces ATP from ADP in the presence of a proton gradient across the membrane. The alpha chain is a regulatory subunit. This Vibrio alginolyticus protein is ATP synthase subunit alpha.